The sequence spans 213 residues: Adenylate kinase (213 aa).

10 to 15 (GAGKGT) contacts ATP. The segment at 30–59 (AVGDIFRTIIKTSTSEAELINNYVKQGALI) is NMP. Residues Arg36, 57–59 (ALI), 85–88 (GYPR), and Gln92 contribute to the AMP site. The tract at residues 123 to 161 (GRYSCKNCGKIYNVHFLQPKTDYVCDVCSSNVFDYRRDD) is LID. Residue Arg124 participates in ATP binding. Residues Cys127 and Cys130 each coordinate Zn(2+). 133–134 (IY) is an ATP binding site. Zn(2+)-binding residues include Cys147 and Cys150. Residues Arg158 and Arg169 each coordinate AMP. Lys197 is a binding site for ATP.

It belongs to the adenylate kinase family. Monomer.

The protein localises to the cytoplasm. It catalyses the reaction AMP + ATP = 2 ADP. Its pathway is purine metabolism; AMP biosynthesis via salvage pathway; AMP from ADP: step 1/1. Catalyzes the reversible transfer of the terminal phosphate group between ATP and AMP. Plays an important role in cellular energy homeostasis and in adenine nucleotide metabolism. This is Adenylate kinase from Rickettsia typhi (strain ATCC VR-144 / Wilmington).